The following is a 745-amino-acid chain: Aminopeptidase NAALADL1 (745 aa).

At 1–6 the chain is on the cytoplasmic side; sequence MHWVKI. A helical; Signal-anchor for type II membrane protein transmembrane segment spans residues 7 to 28; sequence LGVALGAAALLGLGIILGHFAI. The Extracellular segment spans residues 29 to 745; it reads PKATSPLTSS…AATLVPVADL (717 aa). Residues asparagine 128, asparagine 141, and asparagine 235 are each glycosylated (N-linked (GlcNAc...) asparagine). Threonine 263 and leucine 266 together coordinate Ca(2+). Asparagine 279, asparagine 302, and asparagine 329 each carry an N-linked (GlcNAc...) asparagine glycan. An intrachain disulfide couples cysteine 301 to cysteine 318. Histidine 373 and aspartate 383 together coordinate Zn(2+). Catalysis depends on glutamate 421, which acts as the Proton donor/acceptor. Glutamate 422 is a binding site for Zn(2+). Ca(2+)-binding residues include glutamate 430 and glutamate 433. Residue aspartate 450 participates in Zn(2+) binding. Residues asparagine 456 and asparagine 497 are each glycosylated (N-linked (GlcNAc...) asparagine). Histidine 550 is a binding site for Zn(2+). Residues asparagine 593 and asparagine 620 are each glycosylated (N-linked (GlcNAc...) asparagine).

Belongs to the peptidase M28 family. M28B subfamily. In terms of assembly, homodimer. Zn(2+) is required as a cofactor. In terms of processing, N-glycosylated.

It localises to the apical cell membrane. Its function is as follows. Aminopeptidase with broad substrate specificity. Has lower activity with substrates that have Asp or Glu in the P2' position, or Pro in the P3' position. Lacks activity with substrates that have both Pro in the P3' position and Asp or Glu in the P2' position. Lacks carboxypeptidase activity. Lacks dipeptidyl-peptidase IV type activity. The chain is Aminopeptidase NAALADL1 (Naaladl1) from Mus musculus (Mouse).